A 168-amino-acid chain; its full sequence is uncharacterized protein (168 aa).

A helical membrane pass occupies residues 5-24 (IAWASACLLLVMLTGFFTIG).

Its subcellular location is the membrane. This is an uncharacterized protein from Bacillus subtilis (strain 168).